Consider the following 103-residue polypeptide: Ig kappa-b4 chain C region (103 aa).

One can recognise an Ig-like domain in the interval 5-95 (PTVLIFPPAA…KVTQGTTSVV (91 aa)). The cysteines at positions 26 and 85 are disulfide-linked.

In Oryctolagus cuniculus (Rabbit), this protein is Ig kappa-b4 chain C region.